Reading from the N-terminus, the 367-residue chain is Spermidine/putrescine import ATP-binding protein PotA (367 aa).

Residues Ile-10–Ile-240 enclose the ABC transporter domain. Gly-42–Ser-49 contacts ATP.

It belongs to the ABC transporter superfamily. Spermidine/putrescine importer (TC 3.A.1.11.1) family. As to quaternary structure, the complex is composed of two ATP-binding proteins (PotA), two transmembrane proteins (PotB and PotC) and a solute-binding protein (PotD).

The protein localises to the cell membrane. The enzyme catalyses ATP + H2O + polyamine-[polyamine-binding protein]Side 1 = ADP + phosphate + polyamineSide 2 + [polyamine-binding protein]Side 1.. Functionally, part of the ABC transporter complex PotABCD involved in spermidine/putrescine import. Responsible for energy coupling to the transport system. In Oenococcus oeni (strain ATCC BAA-331 / PSU-1), this protein is Spermidine/putrescine import ATP-binding protein PotA.